The chain runs to 1467 residues: Gag-Pol polyprotein (1467 aa).

A lipid anchor (N-myristoyl glycine; by host) is attached at glycine 2. A Nuclear export signal motif is present at residues 16 to 22 (FEHIRLR). Residues 26–32 (KKKYQIK) carry the Nuclear localization signal motif. The disordered stretch occupies residues 116 to 144 (NAERNTTETSSGQKKNDKGVTVPPGGSQN). 2 CCHC-type zinc fingers span residues 402–419 (VKCYNCGKFGHMQRQCPE) and 423–440 (MRCLKCGKPGHLAKDCRG). Positions 535–606 (IKALLDTGAD…TPINIIGRNL (72 aa)) constitute a Peptidase A2 domain. Aspartate 540 (for protease activity; shared with dimeric partner) is an active-site residue. One can recognise a Reverse transcriptase domain in the interval 662 to 852 (EGKISRVGGE…PPYEWMGYKL (191 aa)). Residues aspartate 728, aspartate 803, and aspartate 804 each coordinate Mg(2+). Positions 845–853 (YEWMGYKLW) are RT 'primer grip'. The Tryptophan repeat motif motif lies at 1015-1031 (WEQWWADYWQVSWIPEW). An RNase H type-1 domain is found at 1050–1173 (PIPKEDVYYV…IDKLVSKGIR (124 aa)). The Mg(2+) site is built by aspartate 1114 and aspartate 1165. An Integrase-type zinc finger spans residues 1179–1220 (EKIEEAQEKHERYHNNWKNLADTYGLPQIVAKEIVAMCPKCQ). Histidine 1188, histidine 1192, cysteine 1216, and cysteine 1219 together coordinate Zn(2+). One can recognise an Integrase catalytic domain in the interval 1230-1380 (VDASPGTWQM…TSAERLINII (151 aa)). Mg(2+) contacts are provided by aspartate 1240 and aspartate 1292. The segment at residues 1399 to 1446 (FRVYYREGRDPVWKGPAQLIWKGEGAVVLKDGSDLKVVPRRKAKIIKD) is a DNA-binding region (integrase-type). Positions 1447–1467 (YEPKQRVGNEGDVEGTRGSDN) are disordered.

Homotrimer. Interacts with gp41 (via C-terminus). As to quaternary structure, homodimer. The active site consists of two apposed aspartic acid residues. In terms of assembly, heterodimer of p66 RT and p51 RT (RT p66/p51). Heterodimerization of RT is essential for DNA polymerase activity. Despite the sequence identities, p66 RT and p51 RT have distinct folding. Homotetramer; may further associate as a homohexadecamer. Requires Mg(2+) as cofactor. In terms of processing, specific enzymatic cleavages by the viral protease yield mature proteins. The protease is released by autocatalytic cleavage. The polyprotein is cleaved during and after budding, this process is termed maturation. Proteolytic cleavage of p66 RT removes the RNase H domain to yield the p51 RT subunit. Capsid protein p24 is phosphorylated.

Its subcellular location is the virion. It localises to the host nucleus. The protein resides in the host cytoplasm. The protein localises to the host cell membrane. The enzyme catalyses Specific for a P1 residue that is hydrophobic, and P1' variable, but often Pro.. It catalyses the reaction Endohydrolysis of RNA in RNA/DNA hybrids. Three different cleavage modes: 1. sequence-specific internal cleavage of RNA. Human immunodeficiency virus type 1 and Moloney murine leukemia virus enzymes prefer to cleave the RNA strand one nucleotide away from the RNA-DNA junction. 2. RNA 5'-end directed cleavage 13-19 nucleotides from the RNA end. 3. DNA 3'-end directed cleavage 15-20 nucleotides away from the primer terminus.. The catalysed reaction is 3'-end directed exonucleolytic cleavage of viral RNA-DNA hybrid.. It carries out the reaction DNA(n) + a 2'-deoxyribonucleoside 5'-triphosphate = DNA(n+1) + diphosphate. Its activity is regulated as follows. The viral protease is inhibited by many synthetic protease inhibitors (PIs), such as amprenavir, atazanavir, indinavir, loprinavir, nelfinavir, ritonavir and saquinavir. RT can be inhibited either by nucleoside RT inhibitors (NRTIs) or by non nucleoside RT inhibitors (NNRTIs). NRTIs act as chain terminators, whereas NNRTIs inhibit DNA polymerization by binding a small hydrophobic pocket near the RT active site and inducing an allosteric change in this region. Classical NRTIs are abacavir, adefovir (PMEA), didanosine (ddI), lamivudine (3TC), stavudine (d4T), tenofovir (PMPA), zalcitabine (ddC), and zidovudine (AZT). Classical NNRTIs are atevirdine (BHAP U-87201E), delavirdine, efavirenz (DMP-266), emivirine (I-EBU), and nevirapine (BI-RG-587). The tritherapies used as a basic effective treatment of AIDS associate two NRTIs and one NNRTI. Use of protease inhibitors in tritherapy regimens permit more ambitious therapeutic strategies. Its function is as follows. Gag-Pol polyprotein and Gag polyprotein may regulate their own translation, by the binding genomic RNA in the 5'-UTR. At low concentration, Gag-Pol and Gag would promote translation, whereas at high concentration, the polyproteins encapsidate genomic RNA and then shut off translation. In terms of biological role, matrix protein p17 has two main functions: in infected cell, it targets Gag and Gag-pol polyproteins to the plasma membrane via a multipartite membrane-binding signal, that includes its myristointegration complex. The myristoylation signal and the NLS exert conflicting influences its subcellular localization. The key regulation of these motifs might be phosphorylation of a portion of MA molecules on the C-terminal tyrosine at the time of virus maturation, by virion-associated cellular tyrosine kinase. Implicated in the release from host cell mediated by Vpu. Capsid protein p24 forms the conical core that encapsulates the genomic RNA-nucleocapsid complex in the virion. The core is constituted by capsid protein hexamer subunits. The core is disassembled soon after virion entry. Interaction with host PPIA/CYPA protects the virus from restriction by host TRIM5-alpha and from an unknown antiviral activity in host cells. This capsid restriction by TRIM5 is one of the factors which restricts SIV to the simian species. Functionally, nucleocapsid protein p7 encapsulates and protects viral dimeric unspliced (genomic) RNA. Binds these RNAs through its zinc fingers. Facilitates rearangement of nucleic acid secondary structure during retrotranscription of genomic RNA. This capability is referred to as nucleic acid chaperone activity. Its function is as follows. The aspartyl protease mediates proteolytic cleavages of Gag and Gag-Pol polyproteins during or shortly after the release of the virion from the plasma membrane. Cleavages take place as an ordered, step-wise cascade to yield mature proteins. This process is called maturation. Displays maximal activity during the budding process just prior to particle release from the cell. Also cleaves Nef and Vif, probably concomitantly with viral structural proteins on maturation of virus particles. Hydrolyzes host EIF4GI and PABP1 in order to shut off the capped cellular mRNA translation. The resulting inhibition of cellular protein synthesis serves to ensure maximal viral gene expression and to evade host immune response. In terms of biological role, reverse transcriptase/ribonuclease H (RT) is a multifunctional enzyme that converts the viral dimeric RNA genome into dsDNA in the cytoplasm, shortly after virus entry into the cell. This enzyme displays a DNA polymerase activity that can copy either DNA or RNA templates, and a ribonuclease H (RNase H) activity that cleaves the RNA strand of RNA-DNA heteroduplexes in a partially processive 3' to 5' endonucleasic mode. Conversion of viral genomic RNA into dsDNA requires many steps. A tRNA binds to the primer-binding site (PBS) situated at the 5'-end of the viral RNA. RT uses the 3' end of the tRNA primer to perform a short round of RNA-dependent minus-strand DNA synthesis. The reading proceeds through the U5 region and ends after the repeated (R) region which is present at both ends of viral RNA. The portion of the RNA-DNA heteroduplex is digested by the RNase H, resulting in a ssDNA product attached to the tRNA primer. This ssDNA/tRNA hybridizes with the identical R region situated at the 3' end of viral RNA. This template exchange, known as minus-strand DNA strong stop transfer, can be either intra- or intermolecular. RT uses the 3' end of this newly synthesized short ssDNA to perform the RNA-dependent minus-strand DNA synthesis of the whole template. RNase H digests the RNA template except for two polypurine tracts (PPTs) situated at the 5'-end and near the center of the genome. It is not clear if both polymerase and RNase H activities are simultaneous. RNase H can probably proceed both in a polymerase-dependent (RNA cut into small fragments by the same RT performing DNA synthesis) and a polymerase-independent mode (cleavage of remaining RNA fragments by free RTs). Secondly, RT performs DNA-directed plus-strand DNA synthesis using the PPTs that have not been removed by RNase H as primers. PPTs and tRNA primers are then removed by RNase H. The 3' and 5' ssDNA PBS regions hybridize to form a circular dsDNA intermediate. Strand displacement synthesis by RT to the PBS and PPT ends produces a blunt ended, linear dsDNA copy of the viral genome that includes long terminal repeats (LTRs) at both ends. Integrase catalyzes viral DNA integration into the host chromosome, by performing a series of DNA cutting and joining reactions. This enzyme activity takes place after virion entry into a cell and reverse transcription of the RNA genome in dsDNA. The first step in the integration process is 3' processing. This step requires a complex comprising the viral genome, matrix protein, Vpr and integrase. This complex is called the pre-integration complex (PIC). The integrase protein removes 2 nucleotides from each 3' end of the viral DNA, leaving recessed CA OH's at the 3' ends. In the second step, the PIC enters cell nucleus. This process is mediated through integrase and Vpr proteins, and allows the virus to infect a non dividing cell. This ability to enter the nucleus is specific of lentiviruses, other retroviruses cannot and rely on cell division to access cell chromosomes. In the third step, termed strand transfer, the integrase protein joins the previously processed 3' ends to the 5' ends of strands of target cellular DNA at the site of integration. The 5'-ends are produced by integrase-catalyzed staggered cuts, 5 bp apart. A Y-shaped, gapped, recombination intermediate results, with the 5'-ends of the viral DNA strands and the 3' ends of target DNA strands remaining unjoined, flanking a gap of 5 bp. The last step is viral DNA integration into host chromosome. This involves host DNA repair synthesis in which the 5 bp gaps between the unjoined strands are filled in and then ligated. Since this process occurs at both cuts flanking the SIV genome, a 5 bp duplication of host DNA is produced at the ends of SIV integration. Alternatively, Integrase may catalyze the excision of viral DNA just after strand transfer, this is termed disintegration. In Cercopithecidae (Old World monkeys), this protein is Gag-Pol polyprotein (gag-pol).